Consider the following 237-residue polypeptide: Uridylate kinase (237 aa).

Lys-12 to Gly-15 lines the ATP pocket. Positions Gly-20–Gly-25 are involved in allosteric activation by GTP. Residue Gly-54 participates in UMP binding. Positions 55 and 59 each coordinate ATP. UMP-binding positions include Asp-74 and Thr-135–Thr-142. ATP contacts are provided by Thr-162, Tyr-168, and Asp-171.

The protein belongs to the UMP kinase family. As to quaternary structure, homohexamer.

It localises to the cytoplasm. It catalyses the reaction UMP + ATP = UDP + ADP. The protein operates within pyrimidine metabolism; CTP biosynthesis via de novo pathway; UDP from UMP (UMPK route): step 1/1. With respect to regulation, allosterically activated by GTP. Inhibited by UTP. Catalyzes the reversible phosphorylation of UMP to UDP. This chain is Uridylate kinase, found in Actinobacillus succinogenes (strain ATCC 55618 / DSM 22257 / CCUG 43843 / 130Z).